The chain runs to 658 residues: ATP-dependent RNA helicase DDX3Y (658 aa).

Residues 1–10 (MSHVVVKNDP) are compositionally biased toward basic and acidic residues. The interval 1-141 (MSHVVVKNDP…DDWSKPLPPS (141 aa)) is disordered. The residue at position 2 (S2) is an N-acetylserine. A compositionally biased stretch (polar residues) spans 15 to 34 (QLANLDLNSEKQSGGASTAS). A compositionally biased stretch (basic and acidic residues) spans 44-68 (RNREASKGFHDKDSSGWSCSKDKDA). K55 carries the post-translational modification N6-acetyllysine. Phosphoserine occurs at positions 81, 85, and 89. The segment covering 93–128 (GRFDDRGRSDYDGIGNRDRPGFGRFERSGHSRWCDK) has biased composition (basic and acidic residues). R100 bears the Omega-N-methylarginine mark. S101 is modified (phosphoserine). Y103 is modified (phosphotyrosine). Position 109 is an omega-N-methylarginine (R109). 2 positions are modified to phosphoserine: S129 and S181. A Q motif motif is present at residues 178-206 (ENFSDIDMGEIIMGNIELTRYTRPTPVQK). 198–205 (YTRPTPVQ) lines the ATP pocket. One can recognise a Helicase ATP-binding domain in the interval 209–401 (IPIIKGKRDL…RDFLDEYIFL (193 aa)). Residue K213 forms a Glycyl lysine isopeptide (Lys-Gly) (interchain with G-Cter in SUMO2) linkage. 222–229 (AQTGSGKT) provides a ligand contact to ATP. The short motif at 345-348 (DEAD) is the DEAD box element. Residues 412-573 (NITQKVVWVE…EVPSWLENMA (162 aa)) form the Helicase C-terminal domain. The residue at position 454 (S454) is a Phosphoserine. An Omega-N-methylarginine modification is found at R588. Phosphoserine is present on residues S590 and S601. Residues 597–625 (DYRQSSGSSSSGFGASRGSSSRSGGSGYG) form a disordered region. Residues 601–619 (SSGSSSSGFGASRGSSSRS) show a composition bias toward low complexity. Omega-N-methylarginine is present on residues R613 and R628.

Belongs to the DEAD box helicase family. DDX3/DED1 subfamily. As to quaternary structure, may interact with TDRD3.

It localises to the cytoplasm. The protein resides in the nucleus. The catalysed reaction is ATP + H2O = ADP + phosphate + H(+). In terms of biological role, probable ATP-dependent RNA helicase. May play a role in spermatogenesis. This Pongo abelii (Sumatran orangutan) protein is ATP-dependent RNA helicase DDX3Y (DDX3Y).